Reading from the N-terminus, the 686-residue chain is Solute carrier family 22 member 23 (686 aa).

2 disordered regions span residues 1–62 and 169–193; these read MAID…GGGP and GNRS…DKGD. Residue N24 is glycosylated (N-linked (GlcNAc...) asparagine). 2 helical membrane-spanning segments follow: residues 234 to 254 and 258 to 278; these read FSLL…ADWV and PVLL…ALSV. N-linked (GlcNAc...) asparagine glycosylation occurs at N279. A run of 8 helical transmembrane segments spans residues 288-308, 315-335, 344-364, 467-487, 494-514, 538-558, 569-589, and 598-618; these read FFEG…RIEL, FMIT…MPGL, VLQA…SIFP, ADYY…CVVV, GGLL…LGLL, IAFS…SVFF, CGGL…APII, and FLHH…ILLL.

Belongs to the major facilitator (TC 2.A.1) superfamily. Organic cation transporter (TC 2.A.1.19) family.

It is found in the membrane. The polypeptide is Solute carrier family 22 member 23 (SLC22A23) (Homo sapiens (Human)).